The primary structure comprises 500 residues: Maturase K (500 aa).

The protein belongs to the intron maturase 2 family. MatK subfamily.

The protein localises to the plastid. It is found in the chloroplast. Functionally, usually encoded in the trnK tRNA gene intron. Probably assists in splicing its own and other chloroplast group II introns. The chain is Maturase K from Proboscidea louisianica (Louisiana Devil's-claw).